Here is a 338-residue protein sequence, read N- to C-terminus: Lipoate-protein ligase A (338 aa).

Residues 29–216 form the BPL/LPL catalytic domain; the sequence is DPNQRVLFLW…AFFSHYGERV (188 aa). ATP is bound by residues Arg-71, 76 to 79, and Lys-134; that span reads GAVF. (R)-lipoate is bound at residue Lys-134.

It belongs to the LplA family. In terms of assembly, monomer.

The protein resides in the cytoplasm. The catalysed reaction is L-lysyl-[lipoyl-carrier protein] + (R)-lipoate + ATP = N(6)-[(R)-lipoyl]-L-lysyl-[lipoyl-carrier protein] + AMP + diphosphate + H(+). The protein operates within protein modification; protein lipoylation via exogenous pathway; protein N(6)-(lipoyl)lysine from lipoate: step 1/2. Its pathway is protein modification; protein lipoylation via exogenous pathway; protein N(6)-(lipoyl)lysine from lipoate: step 2/2. In terms of biological role, catalyzes both the ATP-dependent activation of exogenously supplied lipoate to lipoyl-AMP and the transfer of the activated lipoyl onto the lipoyl domains of lipoate-dependent enzymes. This chain is Lipoate-protein ligase A, found in Aeromonas hydrophila subsp. hydrophila (strain ATCC 7966 / DSM 30187 / BCRC 13018 / CCUG 14551 / JCM 1027 / KCTC 2358 / NCIMB 9240 / NCTC 8049).